The sequence spans 329 residues: Aspartate--ammonia ligase (329 aa).

It belongs to the class-II aminoacyl-tRNA synthetase family. AsnA subfamily.

The protein resides in the cytoplasm. The enzyme catalyses L-aspartate + NH4(+) + ATP = L-asparagine + AMP + diphosphate + H(+). The protein operates within amino-acid biosynthesis; L-asparagine biosynthesis; L-asparagine from L-aspartate (ammonia route): step 1/1. This Ureaplasma parvum serovar 3 (strain ATCC 27815 / 27 / NCTC 11736) protein is Aspartate--ammonia ligase.